A 360-amino-acid polypeptide reads, in one-letter code: Peptide chain release factor 1 (360 aa).

An N5-methylglutamine modification is found at Gln-234.

Belongs to the prokaryotic/mitochondrial release factor family. Methylated by PrmC. Methylation increases the termination efficiency of RF1.

It localises to the cytoplasm. Peptide chain release factor 1 directs the termination of translation in response to the peptide chain termination codons UAG and UAA. This chain is Peptide chain release factor 1, found in Clostridium botulinum (strain Eklund 17B / Type B).